The primary structure comprises 131 residues: Large ribosomal subunit protein bL17 (131 aa).

It belongs to the bacterial ribosomal protein bL17 family. Part of the 50S ribosomal subunit. Contacts protein L32.

This is Large ribosomal subunit protein bL17 from Cupriavidus necator (strain ATCC 17699 / DSM 428 / KCTC 22496 / NCIMB 10442 / H16 / Stanier 337) (Ralstonia eutropha).